The primary structure comprises 454 residues: F-box/WD-40 repeat-containing protein At3g52030 (454 aa).

Residues 20 to 66 (PTSIESLDADILCIIFSFLDLFDLVHCTVVCNSWNAVIKRLKLLQAS) enclose the F-box domain. WD repeat units follow at residues 85 to 116 (DRPA…RWEA), 117 to 153 (HSHR…CMEE), 170 to 214 (SKKL…SIFP), 215 to 255 (SRAG…CSQI), 258 to 296 (TQGG…PVAT), 301 to 340 (ITAG…RLWE), 343 to 383 (VSPN…VLSR), and 422 to 454 (KVRP…FNLS).

This Arabidopsis thaliana (Mouse-ear cress) protein is F-box/WD-40 repeat-containing protein At3g52030.